The chain runs to 714 residues: Polyribonucleotide nucleotidyltransferase (714 aa).

Asp-487 and Asp-493 together coordinate Mg(2+). A KH domain is found at 554 to 613 (PRIEVLQIPTDKIRDVIGTGGKVIREIVEKTGAKINIEDDGTVKVASANGESIRAAIKWI). The region spanning 623–691 (GQIYDGTVVK…DRGKVRLSMK (69 aa)) is the S1 motif domain.

It belongs to the polyribonucleotide nucleotidyltransferase family. Mg(2+) serves as cofactor.

It is found in the cytoplasm. It carries out the reaction RNA(n+1) + phosphate = RNA(n) + a ribonucleoside 5'-diphosphate. Involved in mRNA degradation. Catalyzes the phosphorolysis of single-stranded polyribonucleotides processively in the 3'- to 5'-direction. The polypeptide is Polyribonucleotide nucleotidyltransferase (Afipia carboxidovorans (strain ATCC 49405 / DSM 1227 / KCTC 32145 / OM5) (Oligotropha carboxidovorans)).